The following is a 232-amino-acid chain: Large ribosomal subunit protein uL1 (232 aa).

This sequence belongs to the universal ribosomal protein uL1 family. Part of the 50S ribosomal subunit.

Functionally, binds directly to 23S rRNA. The L1 stalk is quite mobile in the ribosome, and is involved in E site tRNA release. Its function is as follows. Protein L1 is also a translational repressor protein, it controls the translation of the L11 operon by binding to its mRNA. This Bacillus velezensis (strain DSM 23117 / BGSC 10A6 / LMG 26770 / FZB42) (Bacillus amyloliquefaciens subsp. plantarum) protein is Large ribosomal subunit protein uL1.